The primary structure comprises 285 residues: Shikimate dehydrogenase (NADP(+)) (285 aa).

Residues 20–22 and threonine 67 each bind shikimate; that span reads SLS. The active-site Proton acceptor is the lysine 71. Residue glutamate 83 participates in NADP(+) binding. Residues asparagine 92 and aspartate 107 each coordinate shikimate. NADP(+) is bound by residues 132–136 and leucine 230; that span reads GAGGA. Tyrosine 232 contacts shikimate. Position 253 (glycine 253) interacts with NADP(+).

It belongs to the shikimate dehydrogenase family. In terms of assembly, homodimer.

The enzyme catalyses shikimate + NADP(+) = 3-dehydroshikimate + NADPH + H(+). The protein operates within metabolic intermediate biosynthesis; chorismate biosynthesis; chorismate from D-erythrose 4-phosphate and phosphoenolpyruvate: step 4/7. Its function is as follows. Involved in the biosynthesis of the chorismate, which leads to the biosynthesis of aromatic amino acids. Catalyzes the reversible NADPH linked reduction of 3-dehydroshikimate (DHSA) to yield shikimate (SA). The chain is Shikimate dehydrogenase (NADP(+)) from Salinibacter ruber (strain DSM 13855 / M31).